Reading from the N-terminus, the 220-residue chain is Probable pterin-4-alpha-carbinolamine dehydratase, chloroplastic (220 aa).

The N-terminal 50 residues, 1-50, are a transit peptide targeting the chloroplast; the sequence is MAATSSSPPCNISASSLLLRQPSRSILKVFGLLPPVSRNNRKLGRLTVTR.

Belongs to the pterin-4-alpha-carbinolamine dehydratase family. As to quaternary structure, interacts with SDIR1. Interacts with AIRP2. Ubiquitinated by SDIR1. Ubiquitination leads to its subsequent degradation, thus controlling abscisic acid (ABA) signaling. Ubiquitinated by AIRP2. Ubiquitination leads to its subsequent degradation, thus controlling abscisic acid (ABA) signaling during drought stress.

Its subcellular location is the plastid. The protein localises to the chloroplast. It localises to the cell membrane. The protein resides in the nucleus. The catalysed reaction is (4aS,6R)-4a-hydroxy-L-erythro-5,6,7,8-tetrahydrobiopterin = (6R)-L-erythro-6,7-dihydrobiopterin + H2O. In terms of biological role, involved in tetrahydrobiopterin biosynthesis. Interacts with and acts downstream of the E3 ubiquitin-protein ligase SDIR1 in abscisic acid (ABA) and salt stress signaling. Regulates the expression of the bZIP transcription factor ABI5, which mediates responses to ABA during seed germination and salt stress. The SDIR1-ATP1/SDIRIP1 complex plays an important role in ABA signaling through the ubiquitination pathway. Acts downstream of AIRP2 in regulation of ABA signaling during drought stress. The protein is Probable pterin-4-alpha-carbinolamine dehydratase, chloroplastic of Arabidopsis thaliana (Mouse-ear cress).